The following is a 114-amino-acid chain: SCP2 domain-containing protein YusD (114 aa).

In terms of domain architecture, SCP2 spans 21–101 (NASTLLITFQ…RALLKLEAIL (81 aa)).

This is SCP2 domain-containing protein YusD (yusD) from Bacillus subtilis (strain 168).